A 34-amino-acid polypeptide reads, in one-letter code: Photosystem I reaction center subunit XII (34 aa).

Residues 5–25 form a helical membrane-spanning segment; sequence ISSPEIFIALVVAAHAAILAL.

Belongs to the PsaM family.

The protein resides in the cellular thylakoid membrane. This Synechococcus sp. (strain CC9902) protein is Photosystem I reaction center subunit XII.